A 377-amino-acid chain; its full sequence is TelA-like protein SSP1345 (377 aa).

A compositionally biased stretch (basic and acidic residues) spans 1–18 (MAREQDSINSHPLDKYID). The segment at 1-39 (MAREQDSINSHPLDKYIDENSANESEIIKSSSQFSHEDQ) is disordered. Residues 20–34 (NSANESEIIKSSSQF) show a composition bias toward polar residues.

It belongs to the TelA family.

In Staphylococcus saprophyticus subsp. saprophyticus (strain ATCC 15305 / DSM 20229 / NCIMB 8711 / NCTC 7292 / S-41), this protein is TelA-like protein SSP1345.